Reading from the N-terminus, the 306-residue chain is Ribosomal RNA small subunit methyltransferase A (306 aa).

Asn-37, Val-39, Gly-64, Glu-85, Asp-115, and Asn-134 together coordinate S-adenosyl-L-methionine.

The protein belongs to the class I-like SAM-binding methyltransferase superfamily. rRNA adenine N(6)-methyltransferase family. RsmA subfamily.

The protein localises to the cytoplasm. It catalyses the reaction adenosine(1518)/adenosine(1519) in 16S rRNA + 4 S-adenosyl-L-methionine = N(6)-dimethyladenosine(1518)/N(6)-dimethyladenosine(1519) in 16S rRNA + 4 S-adenosyl-L-homocysteine + 4 H(+). In terms of biological role, specifically dimethylates two adjacent adenosines (A1518 and A1519) in the loop of a conserved hairpin near the 3'-end of 16S rRNA in the 30S particle. May play a critical role in biogenesis of 30S subunits. The sequence is that of Ribosomal RNA small subunit methyltransferase A from Mycobacterium leprae (strain Br4923).